The primary structure comprises 383 residues: MNIYIDENIPYARDFFTGHGNLHFFSGRNASAEQLIDADVLLVRSITEVNEKLLSLNKKLKFVGTATIGTDHIDQTYLKNRGIVFSSAPGCNKVSVAEYILSSLLVLADQQQFILSDKSIAIVGAGNTGTAVYQRLNALGMNCKLYDPPLLLAGDKRQFCTFEEVLEADIISLHVPKVVQGPFPTVHMFDSKVLSQLTNGQILLNAARGDLIDNQALLELAEQGLTPTLVLDVWENEPHINQQLLPYVAIATPHIAGYSLDGRVRGTEMLYQALCDFLQLKGKYTTADFVHRAAINSVSISKKIDQPLIKSLMHLIFDVRRDDALFREMIEDVDGFDTMRKTYQERRELSTLTVESSVEQNTLLQLLGFSTNVQNEIKETHEI.

Substrate is bound by residues Ser-45 and Thr-67. Asp-147 serves as a coordination point for NAD(+). Arg-208 is an active-site residue. Asp-232 contributes to the NAD(+) binding site. Glu-237 is a catalytic residue. Residue His-254 is the Proton donor of the active site. Gly-257 is an NAD(+) binding site. Tyr-258 is a substrate binding site.

The protein belongs to the D-isomer specific 2-hydroxyacid dehydrogenase family. PdxB subfamily. As to quaternary structure, homodimer.

Its subcellular location is the cytoplasm. The enzyme catalyses 4-phospho-D-erythronate + NAD(+) = (R)-3-hydroxy-2-oxo-4-phosphooxybutanoate + NADH + H(+). Its pathway is cofactor biosynthesis; pyridoxine 5'-phosphate biosynthesis; pyridoxine 5'-phosphate from D-erythrose 4-phosphate: step 2/5. Catalyzes the oxidation of erythronate-4-phosphate to 3-hydroxy-2-oxo-4-phosphonooxybutanoate. The polypeptide is Erythronate-4-phosphate dehydrogenase (Psychromonas ingrahamii (strain DSM 17664 / CCUG 51855 / 37)).